The primary structure comprises 2302 residues: Phosphatidylinositol phosphatase PTPRQ (2302 aa).

The first 18 residues, 1-18 (MMDFHFSFLFLLIGTSES), serve as a signal peptide directing secretion. At 19–1908 (QVDVSSSFDG…GEGLSERTVE (1890 aa)) the chain is on the extracellular side. Asn-54 is a glycosylation site (N-linked (GlcNAc...) asparagine). Fibronectin type-III domains follow at residues 60–155 (PPVF…TAES), 159–254 (KVVN…SSST), 310–398 (PPQN…PPDV), 401–501 (AVFD…PHND), 474–566 (GFYE…TVRT), 570–665 (VPSS…TPED), 670–759 (SPQD…TSET), 764–854 (APEN…TEED), 859–948 (PPQN…TPEG), 953–1053 (PPND…TDQD), 1058–1151 (PVGN…TEED), 1156–1243 (PPII…TDES), 1248–1341 (PPQN…TQES), 1345–1431 (AVRN…LPET), 1435–1539 (APTN…TLPG), 1544–1642 (PPEN…TLES), and 1647–1748 (PPNN…IKAP). Residues Asn-162, Asn-169, Asn-318, Asn-354, and Asn-389 are each glycosylated (N-linked (GlcNAc...) asparagine). Residues Asn-733 and Asn-746 are each glycosylated (N-linked (GlcNAc...) asparagine). 4 N-linked (GlcNAc...) asparagine glycosylation sites follow: Asn-904, Asn-998, Asn-1010, and Asn-1040. 2 N-linked (GlcNAc...) asparagine glycosylation sites follow: Asn-1251 and Asn-1256. N-linked (GlcNAc...) asparagine glycosylation occurs at Asn-1805. Residues 1909-1929 (IILSVTLCILSIILLGTAIFA) traverse the membrane as a helical segment. Topologically, residues 1930-2302 (FVRIRQKQKE…VELEWEETTM (373 aa)) are cytoplasmic. A Tyrosine-protein phosphatase domain is found at 2006-2262 (FQEEFSELPK…IFLHQCILDL (257 aa)). Cys-2203 functions as the Phosphocysteine intermediate in the catalytic mechanism.

This sequence belongs to the protein-tyrosine phosphatase family. Receptor class 2A subfamily. Interacts with TPRN. TPRN, CLIC5 and PTPQR form concentric rings at the base of stereocilia and may form a complex.

The protein resides in the cell projection. It localises to the stereocilium. Its subcellular location is the apical cell membrane. It is found in the basal cell membrane. It carries out the reaction a 1,2-diacyl-sn-glycero-3-phospho-(1D-myo-inositol-3,4,5-trisphosphate) + H2O = a 1,2-diacyl-sn-glycero-3-phospho-(1D-myo-inositol-4,5-bisphosphate) + phosphate. The enzyme catalyses a 1,2-diacyl-sn-glycero-3-phospho-(1D-myo-inositol-3,4,5-trisphosphate) + H2O = a 1,2-diacyl-sn-glycero-3-phospho-(1D-myo-inositol-3,4-bisphosphate) + phosphate. The catalysed reaction is a 1,2-diacyl-sn-glycero-3-phospho-(1D-myo-inositol-3,5-bisphosphate) + H2O = a 1,2-diacyl-sn-glycero-3-phospho-(1D-myo-inositol-5-phosphate) + phosphate. It catalyses the reaction a 1,2-diacyl-sn-glycero-3-phospho-(1D-myo-inositol-3,5-bisphosphate) + H2O = a 1,2-diacyl-sn-glycero-3-phospho-(1D-myo-inositol-3-phosphate) + phosphate. It carries out the reaction a 1,2-diacyl-sn-glycero-3-phospho-(1D-myo-inositol-4,5-bisphosphate) + H2O = a 1,2-diacyl-sn-glycero-3-phospho-(1D-myo-inositol 4-phosphate) + phosphate. In terms of biological role, dephosphorylates phosphatidylinositol phosphates, such as phosphatidylinositol 3,4,5-trisphosphate (PIP3) and phosphatidylinositol 3,5-diphosphates, with preference for PIP3. Phosphate can be hydrolyzed from the D3 and D5 positions in the inositol ring. Has low tyrosine-protein phosphatase activity in vitro; however, the relevance of such activity in vivo is unclear. Plays an important role in adipogenesis of mesenchymal stem cells (MSCs). Regulates the phosphorylation state of AKT1 by regulating the levels of PIP3 level in MSCs and preadipocyte cells. Required for hair bundle maturation, a process that enables hair cells to detect and transmit sound and balance signals effectively, therefore affecting auditory function. May act by regulating the level of phosphatidylinositol 4,5-bisphosphate (PIP2) level in the basal region of hair bundles. This is Phosphatidylinositol phosphatase PTPRQ (Ptprq) from Rattus norvegicus (Rat).